We begin with the raw amino-acid sequence, 591 residues long: Nucleolar protein 58 (591 aa).

The Nop domain occupies 285–410 (IAPNLTALVG…LERKLAAMEG (126 aa)). The tract at residues 413–591 (LKPRGVAIGP…KKKKKKKGEE (179 aa)) is disordered. Basic and acidic residues-rich tracts occupy residues 430–442 (KKFE…RYNA) and 453–462 (ASKKDKKLIE). The span at 463-476 (EVSDEEMADADSDE) shows a compositional bias: acidic residues. 3 stretches are compositionally biased toward basic and acidic residues: residues 477–486 (EPKANGTKDD), 505–515 (GKDTELEKMAE), and 557–571 (KKAS…KRSD). Residues 581–591 (KKKKKKKKGEE) are compositionally biased toward basic residues.

Belongs to the NOP5/NOP56 family.

The protein resides in the nucleus. It is found in the nucleolus. In terms of biological role, required for pre-18S rRNA processing. May bind microtubules. In Neosartorya fischeri (strain ATCC 1020 / DSM 3700 / CBS 544.65 / FGSC A1164 / JCM 1740 / NRRL 181 / WB 181) (Aspergillus fischerianus), this protein is Nucleolar protein 58 (nop58).